The chain runs to 130 residues: Protein ApaG (130 aa).

The ApaG domain maps to 3–127 (RALTRDIEVT…FSLDSPGLVR (125 aa)).

The sequence is that of Protein ApaG from Sinorhizobium fredii (strain NBRC 101917 / NGR234).